Consider the following 21-residue polypeptide: Peptide PGLa-BM2 (21 aa).

The residue at position 21 (alanine 21) is an Alanine amide.

As to expression, expressed by the skin glands.

The protein localises to the secreted. Functionally, antimicrobial peptide. The chain is Peptide PGLa-BM2 from Xenopus boumbaensis (Mawa clawed frog).